The following is a 546-amino-acid chain: 2-isopropylmalate synthase (546 aa).

One can recognise a Pyruvate carboxyltransferase domain in the interval 8-271 (ILIFDTTLRD…NKFFNRNSDS (264 aa)). Residues D17, H208, H210, and N244 each contribute to the Mn(2+) site. The segment at 408–546 (QLSLVQVSCG…DKTLLSNPGK (139 aa)) is regulatory domain.

The protein belongs to the alpha-IPM synthase/homocitrate synthase family. LeuA type 1 subfamily. In terms of assembly, homodimer. The cofactor is Mn(2+).

The protein localises to the cytoplasm. The enzyme catalyses 3-methyl-2-oxobutanoate + acetyl-CoA + H2O = (2S)-2-isopropylmalate + CoA + H(+). The protein operates within amino-acid biosynthesis; L-leucine biosynthesis; L-leucine from 3-methyl-2-oxobutanoate: step 1/4. Functionally, catalyzes the condensation of the acetyl group of acetyl-CoA with 3-methyl-2-oxobutanoate (2-ketoisovalerate) to form 3-carboxy-3-hydroxy-4-methylpentanoate (2-isopropylmalate). This chain is 2-isopropylmalate synthase, found in Prochlorococcus marinus (strain MIT 9215).